The sequence spans 140 residues: Nucleoside diphosphate kinase (140 aa).

Residues lysine 11, phenylalanine 59, arginine 87, threonine 93, arginine 104, and asparagine 114 each coordinate ATP. The Pros-phosphohistidine intermediate role is filled by histidine 117.

It belongs to the NDK family. Homotetramer. It depends on Mg(2+) as a cofactor.

The protein localises to the cytoplasm. It carries out the reaction a 2'-deoxyribonucleoside 5'-diphosphate + ATP = a 2'-deoxyribonucleoside 5'-triphosphate + ADP. The enzyme catalyses a ribonucleoside 5'-diphosphate + ATP = a ribonucleoside 5'-triphosphate + ADP. Major role in the synthesis of nucleoside triphosphates other than ATP. The ATP gamma phosphate is transferred to the NDP beta phosphate via a ping-pong mechanism, using a phosphorylated active-site intermediate. The sequence is that of Nucleoside diphosphate kinase from Jannaschia sp. (strain CCS1).